Consider the following 88-residue polypeptide: Small ribosomal subunit protein uS17 (88 aa).

This sequence belongs to the universal ribosomal protein uS17 family. Part of the 30S ribosomal subunit.

In terms of biological role, one of the primary rRNA binding proteins, it binds specifically to the 5'-end of 16S ribosomal RNA. This Lactobacillus delbrueckii subsp. bulgaricus (strain ATCC 11842 / DSM 20081 / BCRC 10696 / JCM 1002 / NBRC 13953 / NCIMB 11778 / NCTC 12712 / WDCM 00102 / Lb 14) protein is Small ribosomal subunit protein uS17.